A 296-amino-acid polypeptide reads, in one-letter code: MDATKWTQGFQEMINVKPMEQMISSTNNNTPQQQPTFIATNTRPNATASNGGSGGNTNNTATMETRKARPQEKVNCPRCNSTNTKFCYYNNYSLTQPRYFCKGCRRYWTEGGSLRNVPVGGSSRKNKRSSTPLASPSNPKLPDLNPPILFSSQIPNKSNKDLNLLSFPVMQDHHHHALELLRSNGVSSRGMNTFLPGQMMDSNSVLYSSLGFPTMPDYKQSNNNLSFSIDHHQGIGHNTINSNQRAQDNNDDMNGASRVLFPFSDMKELSSTTQEKSHGNNTYWNGMFSNTGGSSW.

Residues 41-69 are disordered; that stretch reads NTRPNATASNGGSGGNTNNTATMETRKAR. A compositionally biased stretch (low complexity) spans 45–62; the sequence is NATASNGGSGGNTNNTAT. A Dof-type zinc finger spans residues 74–128; that stretch reads VNCPRCNSTNTKFCYYNNYSLTQPRYFCKGCRRYWTEGGSLRNVPVGGSSRKNKR. 4 residues coordinate Zn(2+): cysteine 76, cysteine 79, cysteine 101, and cysteine 104. The interval 115 to 146 is disordered; the sequence is RNVPVGGSSRKNKRSSTPLASPSNPKLPDLNP. Polar residues predominate over residues 129–138; sequence SSTPLASPSN.

Expressed in the phloem of the mother plant, including in roots, stem, leaves and flowers, but not present in the seed and embryo. In maturing siliques, found all through the funiculus connecting the placenta to the ovule, but not in the ovule.

The protein localises to the nucleus. In terms of biological role, transcription factor specifically involved in the maternal control of seed germination. Regulates transcription by binding to a 5'-AA[AG]G-3' consensus core sequence. May ensure the inactivity of a component that would be activated to trigger germination as a consequence of red light perception. In Arabidopsis thaliana (Mouse-ear cress), this protein is Dof zinc finger protein DOF3.7 (DOF3.7).